The chain runs to 155 residues: MKLNELRDAEGATKARKRVGRGIGSGSGKTGGRGVKGQKSRSGVAIKGFEGGQMPLYRRLPKRGFTNIFGKDYNEVSLGRIQAAIDANKLDAAATIDGAALLNAGVIRRLKDGVRVLSGGEITAKVTLDVAGASKSAVEKIEKAGGSVKLPEKAA.

Residues 1-13 (MKLNELRDAEGAT) show a composition bias toward basic and acidic residues. Positions 1 to 41 (MKLNELRDAEGATKARKRVGRGIGSGSGKTGGRGVKGQKSR) are disordered. Positions 21 to 35 (RGIGSGSGKTGGRGV) are enriched in gly residues.

Belongs to the universal ribosomal protein uL15 family. In terms of assembly, part of the 50S ribosomal subunit.

Its function is as follows. Binds to the 23S rRNA. The protein is Large ribosomal subunit protein uL15 of Chelativorans sp. (strain BNC1).